Reading from the N-terminus, the 1034-residue chain is Presequence protease, mitochondrial (1034 aa).

A mitochondrion-targeting transit peptide spans 1–29; it reads MLKGGMLSRWKMWSPQYKILRNHLINFKS. His128 is a binding site for Zn(2+). The active-site Proton acceptor is Glu131. Positions 132 and 229 each coordinate Zn(2+).

Belongs to the peptidase M16 family. PreP subfamily. Homodimer. The cofactor is Zn(2+).

The protein resides in the mitochondrion. Functionally, ATP-independent protease that degrades mitochondrial transit peptides after their cleavage. Also degrades other unstructured peptides. This Drosophila melanogaster (Fruit fly) protein is Presequence protease, mitochondrial.